A 519-amino-acid chain; its full sequence is Galactan beta-1,4-galactosyltransferase GALS2 (519 aa).

The helical transmembrane segment at 28–48 (LALMALLVLCTLATLLPFLPS) threads the bilayer. A GT92 domain is found at 257–471 (DYLYCGSSLY…YHGSISQRRE (215 aa)).

The protein belongs to the glycosyltransferase 92 family. Expressed in the midrib of mature leaves, root vasculature, flower filaments, siliques and seeds.

It is found in the golgi apparatus membrane. Functionally, involved in the biosynthesis of beta-1,4-galactan. Beta-1,4-galactans are abundant polysaccharides in plant cell walls and are found as side-chain of rhamnogalacturonan I, which is a major component of pectin. This Arabidopsis thaliana (Mouse-ear cress) protein is Galactan beta-1,4-galactosyltransferase GALS2.